Consider the following 347-residue polypeptide: Quinolinate synthase (347 aa).

The iminosuccinate site is built by His47 and Ser68. [4Fe-4S] cluster is bound at residue Cys113. Iminosuccinate is bound by residues 139–141 (YAN) and Ser156. Cys200 is a [4Fe-4S] cluster binding site. Iminosuccinate is bound by residues 226 to 228 (HPE) and Thr243. Cys297 contributes to the [4Fe-4S] cluster binding site.

The protein belongs to the quinolinate synthase family. Type 1 subfamily. It depends on [4Fe-4S] cluster as a cofactor.

It is found in the cytoplasm. It carries out the reaction iminosuccinate + dihydroxyacetone phosphate = quinolinate + phosphate + 2 H2O + H(+). It participates in cofactor biosynthesis; NAD(+) biosynthesis; quinolinate from iminoaspartate: step 1/1. In terms of biological role, catalyzes the condensation of iminoaspartate with dihydroxyacetone phosphate to form quinolinate. The chain is Quinolinate synthase from Shigella dysenteriae serotype 1 (strain Sd197).